The sequence spans 333 residues: Tetraacyldisaccharide 4'-kinase (333 aa).

55 to 62 lines the ATP pocket; the sequence is TAGGNGKT.

Belongs to the LpxK family.

It catalyses the reaction a lipid A disaccharide + ATP = a lipid IVA + ADP + H(+). It functions in the pathway glycolipid biosynthesis; lipid IV(A) biosynthesis; lipid IV(A) from (3R)-3-hydroxytetradecanoyl-[acyl-carrier-protein] and UDP-N-acetyl-alpha-D-glucosamine: step 6/6. Transfers the gamma-phosphate of ATP to the 4'-position of a tetraacyldisaccharide 1-phosphate intermediate (termed DS-1-P) to form tetraacyldisaccharide 1,4'-bis-phosphate (lipid IVA). The protein is Tetraacyldisaccharide 4'-kinase of Pectobacterium carotovorum subsp. carotovorum (strain PC1).